The following is a 789-amino-acid chain: GDH/6PGL endoplasmic bifunctional protein (789 aa).

The signal sequence occupies residues 1 to 16 (MLLAAMCLALLGCLQA). At glutamine 17 the chain carries Pyrrolidone carboxylic acid. Residues 17–524 (QELKGHVSII…GGQLTFSQQQ (508 aa)) are hexose-6-phosphate dehydrogenase. NADP(+)-binding positions include 29–36 (GATGDLAK) and tyrosine 146. N-linked (GlcNAc...) asparagine glycosylation occurs at asparagine 154. Lysine 171 is a binding site for NADP(+). Residues lysine 171, 201-205 (HYLGK), glutamate 240, and aspartate 259 each bind D-glucose 6-phosphate. Lysine 205 is subject to N6-succinyllysine. Catalysis depends on histidine 264, which acts as the Proton acceptor. N-linked (GlcNAc...) asparagine glycosylation is present at asparagine 279. Lysine 357 and arginine 362 together coordinate D-glucose 6-phosphate. Residue arginine 367 coordinates NADP(+). Position 424 is an N6-succinyllysine (lysine 424). A linker region spans residues 525–538 (LEVLIPDLGSVPKP). The tract at residues 539–789 (SDFQVLGARY…WYMDYEAFLG (251 aa)) is 6-phosphogluconolactonase. Tryptophan 615 serves as a coordination point for NADP(+). Asparagine 681 is a glycosylation site (N-linked (GlcNAc...) asparagine).

In the N-terminal section; belongs to the glucose-6-phosphate dehydrogenase family. The protein in the C-terminal section; belongs to the glucosamine/galactosamine-6-phosphate isomerase family. 6-phosphogluconolactonase subfamily. Homodimer. In terms of tissue distribution, expressed in liver (at protein level). Expressed in muscles. Expressed in adipose tissues.

It is found in the endoplasmic reticulum lumen. It catalyses the reaction D-glucose 6-phosphate + NAD(+) = 6-phospho-D-glucono-1,5-lactone + NADH + H(+). It carries out the reaction D-glucose 6-phosphate + NADP(+) = 6-phospho-D-glucono-1,5-lactone + NADPH + H(+). The catalysed reaction is 6-phospho-D-glucono-1,5-lactone + H2O = 6-phospho-D-gluconate + H(+). The enzyme catalyses 2-deoxy-D-glucose 6-phosphate + NAD(+) = 2-deoxy-6-phospho-D-glucono-1,5-lactone + NADH + H(+). It catalyses the reaction 2-deoxy-D-glucose 6-phosphate + NADP(+) = 2-deoxy-6-phospho-D-glucono-1,5-lactone + NADPH + H(+). It carries out the reaction D-galactose 6-phosphate + NADP(+) = 6-phospho-D-galactono-1,5-lactone + NADPH + H(+). The catalysed reaction is D-galactose 6-phosphate + NAD(+) = 6-phospho-D-galactono-1,5-lactone + NADH + H(+). The enzyme catalyses D-glucosamine 6-phosphate + NADP(+) = 2-amino-2-deoxy-6-phospho-D-glucono-1,5-lactone + NADPH + 2 H(+). It catalyses the reaction D-glucose + NAD(+) = D-glucono-1,5-lactone + NADH + H(+). It carries out the reaction D-glucose + NADP(+) = D-glucono-1,5-lactone + NADPH + H(+). The catalysed reaction is D-glucose 6-sulfate + NADP(+) = 6-sulfo-D-glucono-1,5-lactone + NADPH + H(+). It participates in carbohydrate degradation; pentose phosphate pathway; D-ribulose 5-phosphate from D-glucose 6-phosphate (oxidative stage). Its pathway is carbohydrate degradation; pentose phosphate pathway; D-ribulose 5-phosphate from D-glucose 6-phosphate (oxidative stage): step 2/3. In terms of biological role, bifunctional enzyme localized in the lumen of the endoplasmic reticulum that catalyzes the first two steps of the oxidative branch of the pentose phosphate pathway/shunt, an alternative to glycolysis and a major source of reducing power and metabolic intermediates for biosynthetic processes. Has a hexose-6-phosphate dehydrogenase activity, with broad substrate specificity compared to glucose-6-phosphate 1-dehydrogenase/G6PD, and catalyzes the first step of the pentose phosphate pathway. In addition, acts as a 6-phosphogluconolactonase and catalyzes the second step of the pentose phosphate pathway. May have a dehydrogenase activity for alternative substrates including glucosamine 6-phosphate and glucose 6-sulfate. The main function of this enzyme is to provide reducing equivalents such as NADPH to maintain the adequate levels of reductive cofactors in the oxidizing environment of the endoplasmic reticulum. By producing NADPH that is needed by reductases of the lumen of the endoplasmic reticulum like corticosteroid 11-beta-dehydrogenase isozyme 1/HSD11B1, indirectly regulates their activity. The chain is GDH/6PGL endoplasmic bifunctional protein from Mus musculus (Mouse).